Here is a 184-residue protein sequence, read N- to C-terminus: Large ribosomal subunit protein uL5c (184 aa).

This sequence belongs to the universal ribosomal protein uL5 family. As to quaternary structure, part of the 50S ribosomal subunit; contacts the 5S rRNA.

The protein resides in the plastid. It is found in the chloroplast. Binds 5S rRNA, forms part of the central protuberance of the 50S subunit. This chain is Large ribosomal subunit protein uL5c (rpl5), found in Nephroselmis olivacea (Green alga).